The following is a 485-amino-acid chain: Subtilisin-like protease 1 (485 aa).

An N-terminal signal peptide occupies residues 1–19; sequence MGIFRFISISLAAVSAANA. Positions 20-116 are excised as a propeptide; sequence GHILSMGHAK…VEPDTTITIH (97 aa). The Inhibitor I9 domain maps to 34-116; the sequence is SYIVVMKDGT…VEPDTTITIH (83 aa). Residues 126–400 form the Peptidase S8 domain; the sequence is SWGLARISSQ…NILINNGDAK (275 aa). Residues D158 and H190 each act as charge relay system in the active site. N251 is a glycosylation site (N-linked (GlcNAc...) asparagine). The active-site Charge relay system is the S345. Over residues 377–394 the composition is skewed to polar residues; the sequence is GTSSVTNPGPGTRTNILI. The tract at residues 377–462 is disordered; the sequence is GTSSVTNPGP…HTPFPNDDFN (86 aa). The segment covering 409-418 has biased composition (pro residues); that stretch reads PSQPPKPSQP. Over residues 419–428 the composition is skewed to low complexity; it reads SKPQQPSEPQ. The segment covering 433–455 has biased composition (pro residues); the sequence is PQEPAPGQPAPAPAPVPQHPHTP.

Belongs to the peptidase S8 family.

The protein localises to the secreted. Functionally, secreted subtilisin-like serine protease with keratinolytic activity that contributes to pathogenicity. This chain is Subtilisin-like protease 1 (SUB1), found in Arthroderma otae (Microsporum canis).